We begin with the raw amino-acid sequence, 609 residues long: Alpha-fetoprotein (609 aa).

The N-terminal stretch at methionine 1–serine 18 is a signal peptide. Albumin domains are found at residues arginine 19–threonine 210, lysine 211–glutamine 402, and lysine 403–serine 601. Histidine 22 is a binding site for Cu(2+). 8 cysteine pairs are disulfide-bonded: cysteine 99/cysteine 114, cysteine 113/cysteine 124, cysteine 148/cysteine 193, cysteine 192/cysteine 201, cysteine 224/cysteine 270, cysteine 269/cysteine 277, cysteine 289/cysteine 303, and cysteine 302/cysteine 313. Residues serine 111, serine 115, and serine 117 each carry the phosphoserine; by FAM20C modification. N-linked (GlcNAc...) asparagine glycosylation occurs at asparagine 251. Serine 344 bears the Phosphoserine; by FAM20C mark. Cystine bridges form between cysteine 384/cysteine 393, cysteine 416/cysteine 462, cysteine 461/cysteine 472, cysteine 485/cysteine 501, cysteine 500/cysteine 511, cysteine 538/cysteine 583, and cysteine 582/cysteine 591. Phosphoserine; by FAM20C is present on residues serine 444 and serine 445.

The protein belongs to the ALB/AFP/VDB family. As to quaternary structure, dimeric and trimeric forms have been found in addition to the monomeric form. Independent studies suggest heterogeneity of the N-terminal sequence of the mature protein and of the cleavage site of the signal sequence. Post-translationally, sulfated. As to expression, plasma. Synthesized by the fetal liver and yolk sac.

It localises to the secreted. Binds copper, nickel, and fatty acids as well as, and bilirubin less well than, serum albumin. Only a small percentage (less than 2%) of the human AFP shows estrogen-binding properties. This is Alpha-fetoprotein (AFP) from Homo sapiens (Human).